We begin with the raw amino-acid sequence, 650 residues long: DNA-directed RNA polymerase III subunit rpc3 (650 aa).

4 disordered regions span residues 133–163 (PTAV…EGHT), 264–283 (RGAK…KKAR), 288–313 (AVDE…NIPM), and 400–440 (LAGS…SSDG). Over residues 149–158 (GEGVEGEGIE) the composition is skewed to acidic residues. The span at 288 to 307 (AVDEDEEEEEENEWSEDEMG) shows a compositional bias: acidic residues. A leucine-zipper region spans residues 577–598 (TYKSMSRCLQRLRFERNRLKEF).

It belongs to the RNA polymerase beta chain family. Component of the RNA polymerase III (Pol III) complex consisting of 17 subunits.

It is found in the nucleus. Functionally, DNA-dependent RNA polymerase catalyzes the transcription of DNA into RNA using the four ribonucleoside triphosphates as substrates. Specific core component of RNA polymerase III which synthesizes small RNAs, such as 5S rRNA and tRNAs. In Aspergillus terreus (strain NIH 2624 / FGSC A1156), this protein is DNA-directed RNA polymerase III subunit rpc3 (rpc82).